We begin with the raw amino-acid sequence, 316 residues long: Solute carrier family 25 member 32 (316 aa).

Solcar repeat units follow at residues 20–109 (HVRY…IKSY), 118–209 (LEPL…LKLK), and 222–306 (LSTA…VSHF). The next 6 membrane-spanning stretches (helical) occupy residues 26 to 46 (LVAG…LDLV), 89 to 106 (VWGA…YNAI), 123 to 143 (YLVS…PLWV), 185 to 203 (GFVP…FMAY), 227 to 243 (YISV…AATY), and 281 to 300 (GIAP…FVVY).

The protein belongs to the mitochondrial carrier (TC 2.A.29) family.

It localises to the mitochondrion inner membrane. It catalyses the reaction FAD(in) = FAD(out). Functionally, facilitates flavin adenine dinucleotide (FAD) translocation across the mitochondrial inner membrane into the mitochondrial matrix where it acts as a redox cofactor to assist flavoenzyme activities in fundamental metabolic processes including fatty acid beta-oxidation, amino acid and choline metabolism as well as mitochondrial electron transportation. In particular, provides FAD to DLD dehydrogenase of the glycine cleavage system, part of mitochondrial one-carbon metabolic pathway involved in neural tube closure in early embryogenesis. The protein is Solute carrier family 25 member 32 of Mus musculus (Mouse).